The sequence spans 207 residues: MQHKQAMQTMALAAVCQAAWLVQQVARNGSCDEESMRCLLQGVLITDPNNAESVYPDRTLLREGYKTLVEQLGNNRNPKNVELTRYVIGMVALERKLSGKRRVLSALAERVSQVKRQAFHFDLLTDTVLSNLAGIYSDQISNLGPRIQVSGAPLYLQQPQVQHKIRALLLAGIRACVLWRQLGGRRRQILFFRKKVIAAAEAALRQL.

It belongs to the HflD family.

It localises to the cytoplasm. The protein localises to the cell inner membrane. The protein is High frequency lysogenization protein HflD homolog of Tolumonas auensis (strain DSM 9187 / NBRC 110442 / TA 4).